A 550-amino-acid chain; its full sequence is MFCVQCEQTIRTPAGNGCSYAQGMCGKTAETSDLQDLLIAALQGLSAWAVKAREYGIINHDVDNFAPRAFFSTLTNVNFDSPRIVGYAREAIALREALKAQCLSVDANAHCDNPMADLQLVSDDLGELQRQAAEFTPNKDKAAIGENILGLRLLCLYGLKGAAAYMEHAHVLGQYDNDIYAQYHKIMAWLGTWPADMNALLECAMEIGQMNFKVMSILDAGETTKYGHPTPTQVNVKATEGKCILISGHDLKDLYNLLEQTEGTGVNVYTHGEMLPAHGYPELRKFKHLVGNYGSGWQNQQVEFARFPGPIVMTSNCIIDPTVGSYDDRIWTRSIVGWPGVSHLEGDDFGPVIAQAQQMAGFPYSEIPHLITVGFGRQTLLGTADTLIDLVSREKLRHIFLVGGCDGARGERNYFTDFATSVPDDCLILTLACGKYRFNKLEFGDIEGLPRLVDAGQCNDAYSAIILAVTLAEKLGCGVNDLPLSLVLSWFEQKAIVILLTLLSLGVKNIVTGPTAPGFFTPDLLAILNEKFGLRSVTTVEEDMKQLLSA.

4 residues coordinate [2Fe-2S] cluster: C3, C6, C18, and C25. Residues H249, E273, C317, C405, C433, C458, E492, and K494 each coordinate hybrid [4Fe-2O-2S] cluster. Position 405 is a cysteine persulfide (C405).

It belongs to the HCP family. Requires [2Fe-2S] cluster as cofactor. Hybrid [4Fe-2O-2S] cluster serves as cofactor.

Its subcellular location is the cytoplasm. It carries out the reaction A + NH4(+) + H2O = hydroxylamine + AH2 + H(+). In terms of biological role, catalyzes the reduction of hydroxylamine to form NH(3) and H(2)O. The chain is Hydroxylamine reductase from Salmonella dublin (strain CT_02021853).